A 99-amino-acid chain; its full sequence is Putative GIY-YIG domain-containing protein 242L (99 aa).

The 77-residue stretch at 5–81 (NGWNIYMVTM…KKQTKKVKLQ (77 aa)) folds into the GIY-YIG domain.

The protein is Putative GIY-YIG domain-containing protein 242L of Invertebrate iridescent virus 6 (IIV-6).